We begin with the raw amino-acid sequence, 378 residues long: Alpha-(1,3)-fucosyltransferase fut-5 (378 aa).

Residues 1–7 lie on the Cytoplasmic side of the membrane; sequence MKHNTLR. The helical; Signal-anchor for type II membrane protein transmembrane segment at 8 to 28 threads the bilayer; it reads AVFQFSFFIGICTFIMIAGYS. The Lumenal segment spans residues 29 to 378; it reads YQINYNQRMG…CDNSFATRFL (350 aa). N-linked (GlcNAc...) asparagine glycosylation is found at Asn44, Asn88, Asn105, Asn143, Asn171, and Asn307.

It belongs to the glycosyltransferase 10 family. The cofactor is Ca(2+). In terms of processing, N-glycosylated.

It localises to the golgi apparatus. The protein localises to the golgi stack membrane. The enzyme catalyses a beta-D-galactosyl-(1-&gt;3)-N-acetyl-beta-D-glucosaminyl derivative + GDP-beta-L-fucose = a beta-D-galactosyl-(1-&gt;3)-[alpha-L-fucosyl-(1-&gt;4)]-N-acetyl-beta-D-glucosaminyl derivative + GDP + H(+). The protein operates within protein modification; protein glycosylation. Inhibited by Cu(2+) and Ni(2+), and to a lesser extent by EDTA, Mn(2+) and Mg(2+). Catalyzes the addition of fucose in alpha 1-3 linkage to GalNAc-beta-1-&gt;4-GlcNAc-beta-1-&gt;3-Gal-beta-1-&gt;4-Glc (LDNT)acceptor. Unlike fut-1, does not add fucose to Man-alpha-1-&gt;3-(Man-alpha-1-&gt;6)-Man-beta-1-&gt;4-GlcNAc-beta-1-&gt;4-GlcNAc-beta-1-Asn (M3), Man-alpha-1-&gt;3-(Man-alpha-1-&gt;6)-Man-beta-1-&gt;4-GlcNAc-beta-1-&gt;4-(Fuc-alpha-1-&gt;6)-GlcNAc-beta-1-Asn (M3F6) or GlcNAc-beta-1-&gt;2-Man-alpha-1-&gt;3-(GlcNAc-beta-1-&gt;2-Man-alpha-1-&gt;6)-Man-beta-1-4-GlcNAc-beta-1-&gt;4-(Fuc-alpha-1-&gt;6)-GlcNAc-beta-1-Asn (GnM3F6) acceptors. The chain is Alpha-(1,3)-fucosyltransferase fut-5 from Caenorhabditis elegans.